Here is a 209-residue protein sequence, read N- to C-terminus: C-type lectin domain family 6 member A (209 aa).

At 1-20 the chain is on the cytoplasmic side; that stretch reads MMQEQQPQSTEKRGWLSLRL. A helical; Signal-anchor for type II membrane protein membrane pass occupies residues 21 to 41; the sequence is WSVAGISIALLSACFIVSCVV. Over 42–209 the chain is Extracellular; sequence TYHFTYGETG…SICEMNKIYL (168 aa). Disulfide bonds link Cys66–Cys78, Cys79–Cys90, Cys107–Cys202, and Cys176–Cys194. The region spanning 86-203 is the C-type lectin domain; the sequence is FGSSCYFISS…CETRRNSICE (118 aa). Residues Val116, Asn118, and Glu122 each contribute to the Ca(2+) site. Residue Asn131 is glycosylated (N-linked (GlcNAc...) asparagine). The Ca(2+) site is built by Glu168, Asn170, and Glu174. Alpha-D-mannopyranose is bound by residues 168–170, Glu174, Trp182, 190–191, and Arg198; these read EPN and ND. An N-linked (GlcNAc...) asparagine glycan is attached at Asn170. Residues Asn190 and Asp191 each coordinate Ca(2+). Residue Glu203 participates in Ca(2+) binding.

As to quaternary structure, associated with FCER1G. Heterodimer with CLEC4D; this heterodimer forms a pattern recognition receptor (PRR) against fungal infection. As to expression, expressed in lung, spleen, lymph node, leukocytes, bone marrow, tonsils and dendritic cells. Strongly expressed in purified monocytes and weakly in B-cells. In peripheral blood cells, preferentially expressed in plasmacytoids rather than myeloids.

The protein localises to the cell membrane. Functionally, calcium-dependent lectin that acts as a pattern recognition receptor (PRR) of the innate immune system: specifically recognizes and binds alpha-mannans on C.albicans hypheas. Binding of C.albicans alpha-mannans to this receptor complex leads to phosphorylation of the immunoreceptor tyrosine-based activation motif (ITAM) of FCER1G, triggering activation of SYK, CARD9 and NF-kappa-B, consequently driving maturation of antigen-presenting cells and shaping antigen-specific priming of T-cells toward effector T-helper 1 and T-helper 17 cell subtypes. Recognizes also, in a mannose-dependent manner, allergens from house dust mite and fungi, by promoting cysteinyl leukotriene production. Recognizes soluble elements from the eggs of Shistosoma mansoni altering adaptive immune responses. This chain is C-type lectin domain family 6 member A, found in Homo sapiens (Human).